The following is a 420-amino-acid chain: Serine/threonine-protein phosphatase 4 regulatory subunit 2-A (420 aa).

The tract at residues 157 to 420 is disordered; that stretch reads GNTSAFPDRN…ETADDNMEQD (264 aa). Positions 182-195 are enriched in polar residues; sequence SLSSNVATNGLPDS. Over residues 196-210 the composition is skewed to basic and acidic residues; sequence TESKEQASEQSERTV. Over residues 212-224 the composition is skewed to low complexity; the sequence is ESSASEAESHSGA. Basic and acidic residues predominate over residues 229-250; sequence HRDDEDATHAETHEAKRLKFDK. A compositionally biased stretch (acidic residues) spans 251-266; it reads EEEEEEDDEEEDEDGD. The span at 267 to 276 shows a compositional bias: basic and acidic residues; sequence EIKKELDEPH. Residues 278-296 are compositionally biased toward polar residues; that stretch reads PCTSVAESSSDVPQSSTDV. Residues 318–332 show a composition bias toward basic and acidic residues; sequence GVDRSTSEDSPDPSH. The segment covering 346-364 has biased composition (acidic residues); that stretch reads AEEEEEEESAEAQETEETN. A compositionally biased stretch (low complexity) spans 368-394; it reads SSSSNNSSDEGVSSAETPSASPSSSTE. Positions 411–420 are enriched in acidic residues; sequence ETADDNMEQD.

This sequence belongs to the PPP4R2 family. Serine/threonine-protein phosphatase 4 (PP4) occurs in different assemblies of the catalytic and one or more regulatory subunits.

Its function is as follows. Regulatory subunit of serine/threonine-protein phosphatase 4 (PP4C). The chain is Serine/threonine-protein phosphatase 4 regulatory subunit 2-A (ppp4r2a) from Danio rerio (Zebrafish).